We begin with the raw amino-acid sequence, 381 residues long: tRNA pseudouridine synthase Pus10 (381 aa).

D226 acts as the Nucleophile in catalysis.

The protein belongs to the pseudouridine synthase Pus10 family.

The catalysed reaction is uridine(54) in tRNA = pseudouridine(54) in tRNA. The enzyme catalyses uridine(55) in tRNA = pseudouridine(55) in tRNA. Functionally, responsible for synthesis of pseudouridine from uracil-54 and uracil-55 in the psi GC loop of transfer RNAs. The sequence is that of tRNA pseudouridine synthase Pus10 from Nitrosopumilus maritimus (strain SCM1).